Here is a 543-residue protein sequence, read N- to C-terminus: Zinc finger protein egl-43 (543 aa).

The segment at 2–62 is positive regulatory (PR) domain; sequence SIDTDFLTSV…NLIKEADDGE (61 aa). 2 C2H2-type zinc fingers span residues 159–181 and 187–209; these read HKCGVCPKSFSSASGLKQHSHIH and FRCHLCPKSYTQFSNLCRHRRVH. The C2H2-type 3; atypical zinc finger occupies 213–233; the sequence is WTCPTCQSQMPSQAALTKHRP. The tract at residues 299–380 is disordered; it reads PDAECSSGHA…TSTKKRPTSH (82 aa). Over residues 306-317 the composition is skewed to polar residues; it reads GHASESSPTTTE. Positions 335–348 are enriched in basic and acidic residues; that stretch reads TTSKSDDGEDRDSI. 2 C2H2-type zinc fingers span residues 444 to 466 and 472 to 495; these read YTCKFCQKVFPRSANLTRHLRTH and YKCQYCERSFSISSNLQRHVRNIH. The disordered stretch occupies residues 496-543; that stretch reads NKPNTSLTPHNHHRQRSLHNSTSTSTTTTTVHHPLLHLPGTSVPVPKV. Positions 513 to 533 are enriched in low complexity; it reads LHNSTSTSTTTTTVHHPLLHL.

It localises to the nucleus. Its function is as follows. Probable transcription factor, required for migration of the hermaphrodite-specific motor neurons (HSNs) from the tail to the gonad primordium during HSN cell differentiation. Required for phasmid neuron development. Required to specify the pi-cell fate of ventral uterine precursor cell (VU) cells. Probable transcription factor, involved in lin-12 (Notch)-dependent anchor cell (AC) and ventral uterine (VU) precursor cell fate specification and in AC invasion. Prevents AC proliferation after AC cell specification by repressing lin-12 expression. May form a positive feedback loop, together with the transcription factor fos-1, that maintains mutual high levels of expression and so activates AC invasion. In terms of biological role, dispensable for anchor cell (AC) invasion and for preventing AC proliferation. This Caenorhabditis elegans protein is Zinc finger protein egl-43.